A 475-amino-acid chain; its full sequence is Gustatory and pheromone receptor 33a (475 aa).

The Cytoplasmic segment spans residues 1 to 34 (MIQIMNWFSMVIGLIPLNRQQSETNFILDYAMMC). Residues 35 to 55 (IVPIFYVACYLLINLSHIIGL) traverse the membrane as a helical segment. Over 56–68 (CLLDSCNSVCKLS) the chain is Extracellular. Residues 69-89 (SHLFMHLGAFLYLTITLLSLY) traverse the membrane as a helical segment. At 90-128 (RRKEFFQQFDARLNDIDAVIQKCQRVAEMDKVKVTAVKH) the chain is on the cytoplasmic side. Residues 129 to 149 (SVAYHFTWLFLFCVFTFALYY) form a helical membrane-spanning segment. Residues 150–158 (DVRSLYLTF) are Extracellular-facing. Residues 159–179 (GNLAFIPFMVSSFPYLAGSII) traverse the membrane as a helical segment. Residues 180–319 (QGEFIYHVSV…LALSVITNGE (140 aa)) lie on the Cytoplasmic side of the membrane. Residues 243 to 281 (TGFGNENKFAGEMKRQEGQQKNDDDDLDTSNDEDEDDFD) are disordered. Residues 251–264 (FAGEMKRQEGQQKN) are compositionally biased toward basic and acidic residues. Residues 265 to 281 (DDDDLDTSNDEDEDDFD) are compositionally biased toward acidic residues. The chain crosses the membrane as a helical span at residues 320–340 (FGPQCVPYMAACFVVSIFGIF). The Extracellular portion of the chain corresponds to 341–357 (LETKVNFIVGGKSRLLD). The chain crosses the membrane as a helical span at residues 358-378 (YMTYLYVIWSFTTMMVAYIVL). The Cytoplasmic portion of the chain corresponds to 379 to 441 (RLCCNANNHS…FNGVGLFALD (63 aa)). The chain crosses the membrane as a helical span at residues 442-462 (YTFIFSTVSAATSYLIVLLQF). The Extracellular portion of the chain corresponds to 463 to 475 (DMTAILRNEGLMS).

The protein belongs to the insect chemoreceptor superfamily. Gustatory receptor (GR) family. Gr66a subfamily. In terms of tissue distribution, expressed widely in gustatory receptor neurons (GRNs) that respond to aversive chemicals. In larvae, is expressed in neurons of the terminal external chemosensory organ, and the dorsal, ventral and posterior external chemosensory organs.

It localises to the cell membrane. Gustatory receptor which mediates acceptance or avoidance behavior, depending on its substrates. Required for sensing all nonvolatile repulsive chemicals, including tastants, pheromones, and especially N,N-Diethyl-meta-toluamide (DEET), the most widely used insect repellent worldwide. Also functions as a pheromone receptor for a male inhibitory pheromone leading to male-male courtship suppression. In Drosophila melanogaster (Fruit fly), this protein is Gustatory and pheromone receptor 33a (Gr33a).